A 546-amino-acid chain; its full sequence is MAAKDVVFGDSARSKMVEGVNILANAVKVTLGPKGRNVVLERSFGGPTVTKDGVSVAKEIELKDKLQNMGAQMVKEVASKTSDNAGDGTTTATVLAQSIVREGMKYVASGMNPMDLKRGIDKAVAAAVEELKKISKPCTTNKEIAQVGSISANSDSSIGDRIAEAMDKVGKEGVITVEDGKSLADELDVVEGMQFDRGYLSPYFINNPDKQVAVLDNPFVLLHDKKVSNIRDLLPVLEQVAKAGRPLLIIAEDVEGEALATLVVNNIRGILKTVAVKAPGFGDRRKAMLEDIAILTGGQVIAEETGLTLEKATLAELGQAKRIEVGKENTTIIDGAGEAASIEARVKQVRTQIEEATSDYDREKLQERVAKLAGGVAVIKVGAATEVEMKEKKARVEDALHATRAAVEEGIVAGGGVALIRARTAIAGLTGANADQNAGIKIVLRAMEEPLRQIVTNGGEEASVVVAAVAAGKGNYGYNAATGEYVDMVEAGVVDPTKVTRTALQNAASVAGLLLTTDAAVAELPKEDAPMPGGMPGGMGGMGMDM.

Residues 30 to 33 (TLGP), Lys-51, 87 to 91 (DGTTT), Gly-415, 479 to 481 (NAA), and Asp-495 contribute to the ATP site. The segment at 526–546 (KEDAPMPGGMPGGMGGMGMDM) is disordered. The span at 534–546 (GMPGGMGGMGMDM) shows a compositional bias: gly residues.

Belongs to the chaperonin (HSP60) family. As to quaternary structure, forms a cylinder of 14 subunits composed of two heptameric rings stacked back-to-back. Interacts with the co-chaperonin GroES.

The protein resides in the cytoplasm. The catalysed reaction is ATP + H2O + a folded polypeptide = ADP + phosphate + an unfolded polypeptide.. Together with its co-chaperonin GroES, plays an essential role in assisting protein folding. The GroEL-GroES system forms a nano-cage that allows encapsulation of the non-native substrate proteins and provides a physical environment optimized to promote and accelerate protein folding. This chain is Chaperonin GroEL 1, found in Burkholderia vietnamiensis (strain G4 / LMG 22486) (Burkholderia cepacia (strain R1808)).